Here is a 453-residue protein sequence, read N- to C-terminus: Ribulose bisphosphate carboxylase large chain (453 aa).

The propeptide occupies 1–2 (MS). An N-acetylproline modification is found at proline 3. Lysine 14 is modified (N6,N6,N6-trimethyllysine). Residues asparagine 123 and threonine 173 each coordinate substrate. The Proton acceptor role is filled by lysine 175. Lysine 177 contacts substrate. Lysine 201, aspartate 203, and glutamate 204 together coordinate Mg(2+). N6-carboxylysine is present on lysine 201. Residue histidine 294 is the Proton acceptor of the active site. Residues arginine 295, histidine 327, and serine 379 each contribute to the substrate site.

It belongs to the RuBisCO large chain family. Type I subfamily. Heterohexadecamer of 8 large chains and 8 small chains; disulfide-linked. The disulfide link is formed within the large subunit homodimers. The cofactor is Mg(2+). The disulfide bond which can form in the large chain dimeric partners within the hexadecamer appears to be associated with oxidative stress and protein turnover.

Its subcellular location is the plastid. The protein localises to the chloroplast. The enzyme catalyses 2 (2R)-3-phosphoglycerate + 2 H(+) = D-ribulose 1,5-bisphosphate + CO2 + H2O. It carries out the reaction D-ribulose 1,5-bisphosphate + O2 = 2-phosphoglycolate + (2R)-3-phosphoglycerate + 2 H(+). In terms of biological role, ruBisCO catalyzes two reactions: the carboxylation of D-ribulose 1,5-bisphosphate, the primary event in carbon dioxide fixation, as well as the oxidative fragmentation of the pentose substrate in the photorespiration process. Both reactions occur simultaneously and in competition at the same active site. In Crucianella angustifolia (Narrow-leaved crosswort), this protein is Ribulose bisphosphate carboxylase large chain.